The following is a 255-amino-acid chain: NAD-dependent protein deacylase (255 aa).

In terms of domain architecture, Deacetylase sirtuin-type spans 1 to 252 (MPKLVVFSGA…AEIEQELEQF (252 aa)). Residue 9-28 (GAGLSAESGLETFRDNGGLW) participates in NAD(+) binding. The substrate site is built by Tyr-53 and Arg-56. 103–106 (QNVD) contributes to the NAD(+) binding site. The active-site Proton acceptor is the His-121. Zn(2+) is bound by residues Cys-129, Cys-132, Cys-148, and Cys-151. NAD(+) contacts are provided by residues 190–192 (GTS), 218–220 (NLQ), and Thr-238.

This sequence belongs to the sirtuin family. Class III subfamily. Requires Zn(2+) as cofactor.

It is found in the cytoplasm. The enzyme catalyses N(6)-acetyl-L-lysyl-[protein] + NAD(+) + H2O = 2''-O-acetyl-ADP-D-ribose + nicotinamide + L-lysyl-[protein]. It carries out the reaction N(6)-succinyl-L-lysyl-[protein] + NAD(+) + H2O = 2''-O-succinyl-ADP-D-ribose + nicotinamide + L-lysyl-[protein]. Its function is as follows. NAD-dependent lysine deacetylase and desuccinylase that specifically removes acetyl and succinyl groups on target proteins. Modulates the activities of several proteins which are inactive in their acylated form. In Helicobacter hepaticus (strain ATCC 51449 / 3B1), this protein is NAD-dependent protein deacylase.